Reading from the N-terminus, the 512-residue chain is Putative UDP-glucuronosyltransferase ugt-55 (512 aa).

Positions 1 to 22 (MQLLTLPTLIFIFLNYGTPCLS) are cleaved as a signal peptide. The chain crosses the membrane as a helical span at residues 487–507 (ILLYLDSIAMFTLTLLTMILI).

Belongs to the UDP-glycosyltransferase family.

The protein localises to the membrane. The enzyme catalyses glucuronate acceptor + UDP-alpha-D-glucuronate = acceptor beta-D-glucuronoside + UDP + H(+). This chain is Putative UDP-glucuronosyltransferase ugt-55 (ugt-55), found in Caenorhabditis elegans.